Reading from the N-terminus, the 146-residue chain is Putative transposon Ty5-1 protein YCL075W (146 aa).

This chain is Putative transposon Ty5-1 protein YCL075W (TY5B), found in Saccharomyces cerevisiae (strain ATCC 204508 / S288c) (Baker's yeast).